The following is a 292-amino-acid chain: F-box only protein 16 (292 aa).

Residues 86–132 form the F-box domain; that stretch reads LDFTTKLPRVLSLYIFSFLDPRSLCRCAQVCWHWKNLAELDQLWMLK. Disordered stretches follow at residues 188–224 and 238–292; these read SPEEKQSPLSAFRSSSSLRKKNNSGEKALPPWRSSDK and RDPM…PLCP. A compositionally biased stretch (low complexity) spans 194 to 204; that stretch reads SPLSAFRSSSS. Residues 260–273 are compositionally biased toward basic and acidic residues; it reads RQSHDKKNKLQDRT.

Part of a SCF (SKP1-cullin-F-box) protein ligase complex. Expressed in heart, spleen and colon.

Functionally, probably recognizes and binds to some phosphorylated proteins and promotes their ubiquitination and degradation. The sequence is that of F-box only protein 16 (FBXO16) from Homo sapiens (Human).